The following is a 202-amino-acid chain: MDTETEFDRILLFEQIRQDAENTYKSNPLDADNLTRWGGVLLELSQFHSISDAKQMIQEAITKFEEALLIDPKKDEAVWCIGNAYTSFAFLTPDETEAKHNFDLATQFFQQAVDEQPDNTHYLKSLEMTAKAPQLHAEAYKQGLGSQPMGRVEAPAPPSSKAVKNKKSSDAKYDAMGWVILAIGVVAWISFAKANVPVSPPR.

Met1 carries the N-acetylmethionine modification. At 1-174 (MDTETEFDRI…NKKSSDAKYD (174 aa)) the chain is on the cytoplasmic side. TPR repeat units lie at residues 38–74 (GGVL…DPKK) and 86–119 (TSFA…QPDN). Residues 146 to 166 (SQPMGRVEAPAPPSSKAVKNK) are disordered. A helical membrane pass occupies residues 175–192 (AMGWVILAIGVVAWISFA). Residues 193–202 (KANVPVSPPR) are Mitochondrial intermembrane-facing.

The protein belongs to the Tom20 family. Forms part of the preprotein translocase complex of the outer mitochondrial membrane (TOM complex) which consists of at least 6 different proteins (TOM5, TOM6, TOM7, TOM20, TOM22/TOM9 and TOM40). Component of a mitochondrial large protein complex that contains, at least, MIC60, DGS1, TOM40, TOM20 proteins, and petC/RISP. The N-terminus is blocked. In terms of tissue distribution, expressed in roots, flowers, young cotyledons and leaves.

It localises to the mitochondrion outer membrane. Functionally, central component of the receptor complex responsible for the recognition and translocation of cytosolically synthesized mitochondrial preproteins. Together with TOM22 functions as the transit peptide receptor at the surface of the mitochondrion outer membrane and facilitates the movement of preproteins into the translocation pore. In Arabidopsis thaliana (Mouse-ear cress), this protein is Mitochondrial import receptor subunit TOM20-3.